A 63-amino-acid chain; its full sequence is Ferredoxin (63 aa).

Positions 3 to 31 (WKVSVDVDTCIGDAICASLCPDVFEMGDD) constitute a 4Fe-4S ferredoxin-type domain. [4Fe-4S] cluster contacts are provided by Cys-12, Asp-15, and Cys-18. A disulfide bridge connects residues Cys-22 and Cys-45. Position 53 (Cys-53) interacts with [4Fe-4S] cluster.

Requires [4Fe-4S] cluster as cofactor. It depends on [3Fe-4S] cluster as a cofactor.

Ferredoxins are iron-sulfur proteins that transfer electrons in a wide variety of metabolic reactions. This is Ferredoxin (fdxA) from Thermococcus kodakarensis (strain ATCC BAA-918 / JCM 12380 / KOD1) (Pyrococcus kodakaraensis (strain KOD1)).